The primary structure comprises 232 residues: BTB/POZ domain-containing protein KCTD11 (232 aa).

The BTB domain occupies 1-49 (MLGAMFRAGTPMTPNLNPEGGGHYFIDRDGKAFRHILNFLRLGRLDLPL).

In terms of assembly, homopentamer. Interacts with KCTD6 and KCTD21; KCTD11 and KCTD6 or KCTD21 may associate in pentameric assemblies. Component of the BCR(KCTD11) E3 ubiquitin ligase complex, at least composed of CUL3 and KCTD11 and RBX1. Interacts (via BTB domain) with CUL3; initially a 4:4 stoichiometry has been reported, however, electron microscopy revealed pentameric states of the BTB domain.

It functions in the pathway protein modification; protein ubiquitination. Plays a role as a marker and a regulator of neuronal differentiation; Up-regulated by a variety of neurogenic signals, such as retinoic acid, epidermal growth factor/EGF and NGFB/nerve growth factor. Induces apoptosis, growth arrest and the expression of cyclin-dependent kinase inhibitor CDKN1B. Plays a role as a tumor repressor and inhibits cell growth and tumorigenicity of medulloblastoma (MDB). Acts as a probable substrate-specific adapter for a BCR (BTB-CUL3-RBX1) E3 ubiquitin-protein ligase complex towards HDAC1. Functions as antagonist of the Hedgehog pathway on cell proliferation and differentiation by affecting the nuclear transfer of transcription factor GLI1, thus maintaining cerebellar granule cells in undifferentiated state, this effect probably occurs via HDAC1 down-regulation, keeping GLI1 acetylated and inactive. The protein is BTB/POZ domain-containing protein KCTD11 (KCTD11) of Bos taurus (Bovine).